The following is a 505-amino-acid chain: Serine/threonine-protein kinase D (505 aa).

One can recognise a Protein kinase domain in the interval 9–271 (YEIVKSLGSG…AMYQALHSLI (263 aa)). ATP-binding positions include 15–23 (LGSGGFGDT) and Lys-40. Asp-136 (proton acceptor) is an active-site residue. The 70-residue stretch at 436-505 (GASATIGGIP…GWIASQLVNF (70 aa)) folds into the SH3b domain.

It belongs to the protein kinase superfamily. Ser/Thr protein kinase family.

The catalysed reaction is L-seryl-[protein] + ATP = O-phospho-L-seryl-[protein] + ADP + H(+). The enzyme catalyses L-threonyl-[protein] + ATP = O-phospho-L-threonyl-[protein] + ADP + H(+). The chain is Serine/threonine-protein kinase D (spkD) from Synechocystis sp. (strain ATCC 27184 / PCC 6803 / Kazusa).